Here is a 359-residue protein sequence, read N- to C-terminus: 24-methylenesterol C-methyltransferase 3 (359 aa).

The helical transmembrane segment at 4-24 (VALYCTAGLIAGAVYWFICVL) threads the bilayer.

This sequence belongs to the class I-like SAM-binding methyltransferase superfamily. Erg6/SMT family.

It localises to the membrane. It carries out the reaction 24-methylidenelophenol + S-adenosyl-L-methionine = (Z)-24-ethylidenelophenol + S-adenosyl-L-homocysteine + H(+). Its pathway is steroid biosynthesis; sterol biosynthesis. Catalyzes the methyl transfer from S-adenosyl-methionine to the methylene group of 24-methylene lophenol to form 24-ethylidene lophenol. This Arabidopsis thaliana (Mouse-ear cress) protein is 24-methylenesterol C-methyltransferase 3 (SMT3).